The sequence spans 116 residues: U30-theraphotoxin-Cg1a (116 aa).

The first 17 residues, 1–17 (MKLCVLTIASLLVTVTS), serve as a signal peptide directing secretion. A propeptide spanning residues 18-53 (LETQKEIAEGSELTREETPSLVEHKEDEAAAASEKR) is cleaved from the precursor. A disordered region spans residues 24-46 (IAEGSELTREETPSLVEHKEDEA). 4 disulfide bridges follow: Cys55/Cys69, Cys62/Cys75, Cys66/Cys112, and Cys68/Cys88.

Belongs to the neurotoxin 03 (Tx2) family. 02 subfamily. HNTX-XV sub-subfamily. Expressed by the venom gland.

The protein localises to the secreted. Probable ion channel inhibitor. This chain is U30-theraphotoxin-Cg1a, found in Chilobrachys guangxiensis (Chinese earth tiger tarantula).